A 340-amino-acid polypeptide reads, in one-letter code: KH domain-containing RNA-binding protein QKI (340 aa).

The KH domain occupies 87 to 153 (YVPVKEYPDF…WEHLNEDLHV (67 aa)). Positions 275–278 (PPGP) match the SH3-binding motif. Residues 323-329 (RVHPYQR) carry the Nuclear localization signal motif.

Belongs to the quaking family. As to quaternary structure, homodimer; does not require RNA to homodimerize.

The protein localises to the cytoplasm. It localises to the nucleus. Its function is as follows. RNA reader protein, which recognizes and binds specific RNAs, thereby regulating RNA metabolic processes, such as pre-mRNA splicing, circular RNA (circRNA) formation, mRNA export, mRNA stability and/or translation. Involved in various cellular processes, such as mRNA storage into stress granules, apoptosis, interferon response, glial cell fate and development. Binds to the 5'-NACUAAY-N(1,20)-UAAY-3' RNA core sequence. Acts as a mRNA modification reader that specifically recognizes and binds mRNA transcripts modified by internal N(7)-methylguanine (m7G). Promotes the formation of circular RNAs (circRNAs): acts by binding to sites flanking circRNA-forming exons. CircRNAs are produced by back-splicing circularization of pre-mRNAs. Required to protect and promote stability of mRNAs which promotes oligodendrocyte differentiation. Acts as an important regulator of muscle development. In Gallus gallus (Chicken), this protein is KH domain-containing RNA-binding protein QKI.